Consider the following 526-residue polypeptide: PTS system alpha-glucoside-specific EIICB component (526 aa).

Residues 1–417 enclose the PTS EIIC type-1 domain; that stretch reads MLKHFQRLGG…YNVKTSGRED (417 aa). The next 12 helical transmembrane spans lie at 12 to 32, 59 to 79, 88 to 108, 132 to 152, 173 to 193, 200 to 220, 224 to 244, 274 to 294, 305 to 325, 330 to 350, 355 to 375, and 381 to 401; these read LFAP…TIIL, GWTV…IGLA, LAVL…LTFW, IKTL…TIYI, LVSA…CLVW, ISSL…LYTF, ILIP…GPAV, GGFA…ALAM, IVSG…ITEP, FLFI…TMAA, FGVV…WLPL, and GVMF…YLVF. The 80-residue stretch at 447–526 folds into the PTS EIIB type-1 domain; it reads SGKAKAFLEA…ESFENLMEQN (80 aa). C469 acts as the Phosphocysteine intermediate; for EIIB activity in catalysis.

It is found in the cell membrane. Functionally, the phosphoenolpyruvate-dependent sugar phosphotransferase system (sugar PTS), a major carbohydrate active -transport system, catalyzes the phosphorylation of incoming sugar substrates concomitantly with their translocation across the cell membrane. This system is involved in alpha-glucoside transport. This Fusobacterium mortiferum protein is PTS system alpha-glucoside-specific EIICB component (malB).